The chain runs to 330 residues: Succinylglutamate desuccinylase (330 aa).

Zn(2+) is bound by residues His53, Glu56, and His147. Glu210 is an active-site residue.

The protein belongs to the AspA/AstE family. Succinylglutamate desuccinylase subfamily. It depends on Zn(2+) as a cofactor.

The enzyme catalyses N-succinyl-L-glutamate + H2O = L-glutamate + succinate. Its pathway is amino-acid degradation; L-arginine degradation via AST pathway; L-glutamate and succinate from L-arginine: step 5/5. Functionally, transforms N(2)-succinylglutamate into succinate and glutamate. The protein is Succinylglutamate desuccinylase of Yersinia pseudotuberculosis serotype O:3 (strain YPIII).